The following is a 429-amino-acid chain: Ribosomal RNA small subunit methyltransferase B (429 aa).

S-adenosyl-L-methionine contacts are provided by residues 254-260 (CAAPGGK), Asp-277, Asp-303, and Asp-322. Cys-375 functions as the Nucleophile in the catalytic mechanism.

The protein belongs to the class I-like SAM-binding methyltransferase superfamily. RsmB/NOP family.

The protein resides in the cytoplasm. The enzyme catalyses cytidine(967) in 16S rRNA + S-adenosyl-L-methionine = 5-methylcytidine(967) in 16S rRNA + S-adenosyl-L-homocysteine + H(+). In terms of biological role, specifically methylates the cytosine at position 967 (m5C967) of 16S rRNA. This Escherichia coli O7:K1 (strain IAI39 / ExPEC) protein is Ribosomal RNA small subunit methyltransferase B.